Reading from the N-terminus, the 304-residue chain is Peroxisomal membrane protein 13 (304 aa).

Disordered stretches follow at residues 1-78 (MASQ…WEQQ) and 258-304 (PRKM…VWGN). Polar residues-rich tracts occupy residues 19 to 44 (NTSGPNPFRPPSNTSTAGSVEASGTA) and 56 to 67 (RPNTAANMNSLS). Residues 262–279 (QQPPQGPNGLPLPHQPHG) are compositionally biased toward low complexity.

This sequence belongs to the peroxin-13 family. As to quaternary structure, interacts with PEX14; forming the PEX13-PEX14 docking complex. Interacts (via N-terminus) with PEX7, but not with PEX5. Interacts with APEM9 (via N-terminus). As to expression, highly expressed in pollen. Detected in shoots, roots, stems, leaves, inflorescences and emasculated postils. Strongly expressed in both male and female gametophytes during fertilization.

Its subcellular location is the peroxisome membrane. Component of the PEX13-PEX14 docking complex, a translocon channel that specifically mediates the import of peroxisomal cargo proteins bound to PEX5 receptor. The PEX13-PEX14 docking complex forms a large import pore which can be opened to a diameter of about 9 nm. Mechanistically, PEX5 receptor along with cargo proteins associates with the PEX14 subunit of the PEX13-PEX14 docking complex in the cytosol, leading to the insertion of the receptor into the organelle membrane with the concomitant translocation of the cargo into the peroxisome matrix. Essential for pollen-tube discharge that take place only in the presence of functional peroxisomes in either the male or the female gametophyte. This Arabidopsis thaliana (Mouse-ear cress) protein is Peroxisomal membrane protein 13.